Consider the following 482-residue polypeptide: Probable F-box protein At1g30780 (482 aa).

The F-box domain maps to 230-280; it reads EIDLDSLPFDLKMVILTRLSAKSLTNFKRVSKMWSSIIGSQRFIDSFFTMS.

This is Probable F-box protein At1g30780 from Arabidopsis thaliana (Mouse-ear cress).